The sequence spans 375 residues: Probable pectin lyase D (375 aa).

The N-terminal stretch at Met-1–Gly-19 is a signal peptide. Disulfide bonds link Cys-82–Cys-101 and Cys-91–Cys-225. Asn-128 carries an N-linked (GlcNAc...) asparagine glycan. The active site involves Arg-255. A disulfide bridge links Cys-321 with Cys-329.

The protein belongs to the polysaccharide lyase 1 family.

It is found in the secreted. The enzyme catalyses Eliminative cleavage of (1-&gt;4)-alpha-D-galacturonan methyl ester to give oligosaccharides with 4-deoxy-6-O-methyl-alpha-D-galact-4-enuronosyl groups at their non-reducing ends.. In terms of biological role, pectinolytic enzymes consist of four classes of enzymes: pectin lyase, polygalacturonase, pectin methylesterase and rhamnogalacturonase. Among pectinolytic enzymes, pectin lyase is the most important in depolymerization of pectin, since it cleaves internal glycosidic bonds of highly methylated pectins. This Aspergillus flavus (strain ATCC 200026 / FGSC A1120 / IAM 13836 / NRRL 3357 / JCM 12722 / SRRC 167) protein is Probable pectin lyase D (pelD).